The following is a 74-amino-acid chain: Somatostatin-2 (74 aa).

Positions 1–46 are excised as a propeptide; that stretch reads ARGAGLLSQDWSAVEDLLAQMSLPEADAQREAEVVSVATGGRLNLE. A disulfide bridge links cysteine 63 with cysteine 74.

Belongs to the somatostatin family.

Its subcellular location is the secreted. Functionally, somatostatin inhibits the release of somatotropin. The polypeptide is Somatostatin-2 (sst2) (Myoxocephalus scorpius (Shorthorn sculpin)).